The sequence spans 710 residues: Nucleolin (710 aa).

A disordered region spans residues Met1–Pro303. Residues Lys9, Lys15, and Lys16 each carry the N6-acetyllysine modification. Residues Val24–Gly43 are compositionally biased toward acidic residues. Phosphoserine is present on residues Ser28, Ser34, Ser41, and Ser42. Positions Ala56–Pro107 are enriched in low complexity. Repeat unit 1 spans residues Ala58–Val65. The 8 X 8 AA tandem repeats of X-T-P-X-K-K-X-X stretch occupies residues Ala58 to Lys135. At Ser67 the chain carries Phosphoserine. 4 positions are modified to phosphothreonine: Thr69, Thr76, Thr84, and Thr92. Repeat copies occupy residues Ala75–Ala82, Val83–Ala90, and Ala91–Val98. Lys96 carries the post-translational modification N6-acetyllysine. The residue at position 99 (Thr99) is a Phosphothreonine. A 5; truncated repeat occupies Thr99–Val104. N6-acetyllysine is present on Lys102. The stretch at Thr105 to Ala112 is repeat 6. Thr106 is subject to Phosphothreonine. N6-acetyllysine is present on Lys109. Thr113 carries the phosphothreonine modification. Lys116 is modified (N6-acetyllysine). 2 repeat units span residues Ala120 to Ala127 and Ala128 to Lys135. Thr121 is subject to Phosphothreonine. Residues Pro122–Gly137 show a composition bias toward low complexity. Position 124 is an N6-acetyllysine (Lys124). 2 positions are modified to phosphoserine: Ser145 and Ser153. Residues Ser145–Glu171 are compositionally biased toward acidic residues. Over residues Pro172–Ala183 the composition is skewed to low complexity. Phosphoserine occurs at positions 184 and 206. The span at Ser184 to Met211 shows a compositional bias: acidic residues. Thr214 carries the phosphothreonine modification. A compositionally biased stretch (acidic residues) spans Glu234 to Pro272. Residues Val273–Gly300 show a composition bias toward basic and acidic residues. A Glycyl lysine isopeptide (Lys-Gly) (interchain with G-Cter in SUMO1); alternate cross-link involves residue Lys297. Residue Lys297 forms a Glycyl lysine isopeptide (Lys-Gly) (interchain with G-Cter in SUMO2); alternate linkage. Residue Thr301 is modified to Phosphothreonine. RRM domains lie at Phe307–Gly383 and Arg393–Glu466. An N6-acetyllysine modification is found at Lys318. A Glycyl lysine isopeptide (Lys-Gly) (interchain with G-Cter in SUMO1); alternate cross-link involves residue Lys324. Residue Lys324 forms a Glycyl lysine isopeptide (Lys-Gly) (interchain with G-Cter in SUMO2); alternate linkage. Lys348 carries the post-translational modification N6-acetyllysine. Ser356 is modified (phosphoserine). Position 367 is a phosphothreonine (Thr367). A Glycyl lysine isopeptide (Lys-Gly) (interchain with G-Cter in SUMO2) cross-link involves residue Lys370. Lys377 participates in a covalent cross-link: Glycyl lysine isopeptide (Lys-Gly) (interchain with G-Cter in SUMO2); alternate. Lys377 is subject to N6-acetyllysine; alternate. Residues Lys398 and Lys403 each carry the N6-acetyllysine modification. Thr405 is modified (phosphothreonine). Residues Lys427 and Lys444 each carry the N6-acetyllysine modification. Phosphoserine is present on residues Ser458 and Ser460. Residues Lys467 and Lys477 each carry the N6-acetyllysine modification. Residues Lys486 to Pro560 enclose the RRM 3 domain. Residue Lys513 forms a Glycyl lysine isopeptide (Lys-Gly) (interchain with G-Cter in SUMO2); alternate linkage. Lys513 carries the post-translational modification N6-acetyllysine; alternate. Lys521 is subject to N6-acetyllysine. A Phosphoserine modification is found at Ser563. Lys572 carries the post-translational modification N6-acetyllysine. Positions Lys572–Pro647 constitute an RRM 4 domain. Lys577 participates in a covalent cross-link: Glycyl lysine isopeptide (Lys-Gly) (interchain with G-Cter in SUMO2); alternate. Lys577 is subject to N6-acetyllysine; alternate. At Ser580 the chain carries Phosphoserine. A Glycyl lysine isopeptide (Lys-Gly) (interchain with G-Cter in SUMO1); alternate cross-link involves residue Lys589. A Glycyl lysine isopeptide (Lys-Gly) (interchain with G-Cter in SUMO2); alternate cross-link involves residue Lys589. Phosphoserine occurs at positions 591 and 619. A Glycyl lysine isopeptide (Lys-Gly) (interchain with G-Cter in SUMO2) cross-link involves residue Lys624. Positions Val640–Glu710 are disordered. Position 646 is an N6-acetyllysine (Lys646). Residues Glu650–Gly696 are compositionally biased toward gly residues. An asymmetric dimethylarginine mark is found at Arg656, Arg660, Arg666, Arg670, Arg673, Arg679, Arg681, Arg687, and Arg691. An Asymmetric dimethylarginine; alternate modification is found at Arg694. Position 694 is an omega-N-methylarginine; alternate (Arg694). Residues Gly697–Glu710 show a composition bias toward basic and acidic residues.

In terms of assembly, identified in a IGF2BP1-dependent mRNP granule complex containing untranslated mRNAs. Component of the SWAP complex that consists of NPM1, NCL/nucleolin, PARP1 and SWAP70. Component of a complex which is at least composed of HTATSF1/Tat-SF1, the P-TEFb complex components CDK9 and CCNT1, RNA polymerase II, SUPT5H, and NCL/nucleolin. Interacts with AICDA. Interacts with APTX. Interacts with C1QBP. Interacts with ERBB4. Interacts (via C-terminus) with FMR1 isoform 6 (via N-terminus). Interacts with GZF1; this interaction is important for nucleolar localization of GZF1. Interacts with NSUN2. Interacts with NVL. Interacts (via N-terminus domain) with SETX. Interacts (via RRM1 and C-terminal RRM4/Arg/Gly-rich domains) with TERT; the interaction is important for nucleolar localization of TERT. Interacts with WDR46. Interacts with ZFP36. Interacts with LRRC34. Interacts with RRP1B. Interacts with HNRNPU; this interaction occurs during mitosis. Interacts with RIOK1; RIOK1 recruits NCL to PRMT5 for symmetrically methylation. Interacts with ZBTB7B. Interacts with MDK; this interaction promotes NCL clustering and lateral movements of this complex into lipid rafts leading to MDK internalization. Interacts with HDGF (isoform 1). Interacts with ALKBH2. Interacts with IGFBP5; this interaction is necessary for IGFBP5 localization to the nucleus. Interacts with DDX24 (when ubiquitinated); this interaction may be important during ribosome biogenesis. Post-translationally, some glutamate residues are glycylated by TTLL8. This modification occurs exclusively on glutamate residues and results in a glycine chain on the gamma-carboxyl group. Symmetrically methylated by PRMT5.

The protein resides in the nucleus. Its subcellular location is the nucleolus. The protein localises to the cytoplasm. Nucleolin is the major nucleolar protein of growing eukaryotic cells. It is found associated with intranucleolar chromatin and pre-ribosomal particles. It induces chromatin decondensation by binding to histone H1. It is thought to play a role in pre-rRNA transcription and ribosome assembly. May play a role in the process of transcriptional elongation. Binds RNA oligonucleotides with 5'-UUAGGG-3' repeats more tightly than the telomeric single-stranded DNA 5'-TTAGGG-3' repeats. This chain is Nucleolin (NCL), found in Homo sapiens (Human).